Here is a 202-residue protein sequence, read N- to C-terminus: Small ribosomal subunit protein uS5 (202 aa).

One can recognise an S5 DRBM domain in the interval 50-113 (LKQELLNLNL…REAKLNITPV (64 aa)).

This sequence belongs to the universal ribosomal protein uS5 family. As to quaternary structure, part of the 30S ribosomal subunit. Contacts protein S4.

Functionally, with S4 and S12 plays an important role in translational accuracy. The polypeptide is Small ribosomal subunit protein uS5 (Pyrobaculum calidifontis (strain DSM 21063 / JCM 11548 / VA1)).